Here is a 411-residue protein sequence, read N- to C-terminus: Creatinase (411 aa).

The active site involves histidine 240.

It belongs to the peptidase M24 family. Creatinase subfamily. As to quaternary structure, homodimer.

The catalysed reaction is creatine + H2O = sarcosine + urea. This is Creatinase from Bacillus sp. (strain B-0618).